Consider the following 104-residue polypeptide: Large ribosomal subunit protein uL23 (104 aa).

It belongs to the universal ribosomal protein uL23 family. In terms of assembly, part of the 50S ribosomal subunit. Contacts protein L29, and trigger factor when it is bound to the ribosome.

Functionally, one of the early assembly proteins it binds 23S rRNA. One of the proteins that surrounds the polypeptide exit tunnel on the outside of the ribosome. Forms the main docking site for trigger factor binding to the ribosome. The polypeptide is Large ribosomal subunit protein uL23 (Nostoc punctiforme (strain ATCC 29133 / PCC 73102)).